A 1079-amino-acid chain; its full sequence is Psi-producing oxygenase A (1079 aa).

The tract at residues 105 to 446 is linoleate 8R-lipoxygenase; that stretch reads TNTFLTTLWN…DGSYDDNDLV (342 aa). Histidine 202 contacts heme b. Tyrosine 374 is a catalytic residue. Histidine 377 provides a ligand contact to heme b. Residues 654–1079 form a 9,12-octadecadienoate 8-hydroperoxide 8R-isomerase region; it reads QFINSHSACM…WDGDLPEVKE (426 aa).

It belongs to the peroxidase family. In terms of assembly, homotetramer. Requires heme b as cofactor.

It carries out the reaction (9Z,12Z)-octadecadienoate + O2 = (8R,9Z,12Z)-8-hydroperoxyoctadeca-9,12-dienoate. The catalysed reaction is (8R,9Z,12Z)-8-hydroperoxyoctadeca-9,12-dienoate = (5S,8R,9Z,12Z)-5,8-dihydroxyoctadeca-9,12-dienoate. Functionally, bifunctional heme-containing enzyme that oxidizes linoleic acid to (8R,9Z,12Z)-8-hydroperoxyoctadeca-9,12-dienoate (within the N-terminal heme peroxidase domain), which is subsequently isomerized to (5S,8R,9Z,12Z)-5,8-dihydroxyoctadeca-9,12-dienoate (within the C-terminal P450 heme thiolate domain). Oxidized unsaturated fatty acids, so-called oxylipins, derived from endogenous fatty acids, influence the development of the asexual conidiophores and sexual cleistothecia and regulate the secondary metabolism. These substances were collectively named psi factors and are primarily a mixture of hydroxylated oleic, linoleic and alpha-linolenic acids. They are termed psi-beta, psi-alpha, and psi-gamma, respectively. Oxylipins may also serve as activators of mammalian immune responses contributing to enhanced resistance to opportunistic fungi and as factors that modulate fungal development contributing to resistance to host defenses. The protein is Psi-producing oxygenase A (ppoA) of Aspergillus fumigatus (strain CBS 144.89 / FGSC A1163 / CEA10) (Neosartorya fumigata).